A 210-amino-acid polypeptide reads, in one-letter code: Sortase A (210 aa).

The Cytoplasmic segment spans residues 1–5; that stretch reads MNKQR. A helical membrane pass occupies residues 6–26; sequence IYSIVAILLFVVGGVLIGKPF. Residues 27–210 are Extracellular-facing; it reads YDGYQAEKKQ…GDLVGTKAKK (184 aa). Residue His-126 is the Proton donor/acceptor of the active site. Residue Cys-187 is the Acyl-thioester intermediate of the active site.

The protein belongs to the bacterial sortase family. Class A subfamily.

The protein localises to the cell membrane. Inhibited by thiol-reactive reagents. Functionally, transpeptidase that anchors surface proteins to the cell wall. Recognizes and modifies its substrate by proteolytic cleavage of a C-terminal sorting signal. Following cleavage, a covalent intermediate is formed via a thioester bond between the sortase and its substrate, which is then transferred and covalently attached to the cell wall. This sortase recognizes a Leu-Pro-x-Thr-Gly (LPXTG) motif, which is cleaved by the sortase between the threonine and glycine residues. Important for growth in macrophages. May be critical in the early stages of inhalation anthrax. The sequence is that of Sortase A from Bacillus anthracis.